Consider the following 892-residue polypeptide: Integrator complex subunit 6 (892 aa).

The VWFA domain occupies 3-227 (ILLFLIDTSA…QCLESLVQKV (225 aa)). An Inhibitory loop motif is present at residues 630-637 (MMIDEADE). Disordered regions lie at residues 665 to 692 (MSPL…GTQG), 711 to 754 (VGGT…AAPD), and 771 to 793 (PDHT…EVNE).

It belongs to the Integrator subunit 6 family. In terms of assembly, component of the Integrator complex, composed of core subunits INTS1, INTS2, INTS3, INTS4, INTS5, INTS6, INTS7, INTS8, INTS9/RC74, INTS10, INTS11/CPSF3L, INTS12, INTS13, INTS14 and INTS15. The core complex associates with protein phosphatase 2A subunits PPP2CA and PPP2R1A, to form the Integrator-PP2A (INTAC) complex.

It localises to the nucleus. The protein resides in the chromosome. Functionally, component of the integrator complex, a multiprotein complex that terminates RNA polymerase II (Pol II) transcription in the promoter-proximal region of genes. The integrator complex provides a quality checkpoint during transcription elongation by driving premature transcription termination of transcripts that are unfavorably configured for transcriptional elongation: the complex terminates transcription by (1) catalyzing dephosphorylation of the C-terminal domain (CTD) of Pol II subunit POLR2A/RPB1 and SUPT5H/SPT5, (2) degrading the exiting nascent RNA transcript via endonuclease activity and (3) promoting the release of Pol II from bound DNA. The integrator complex is also involved in terminating the synthesis of non-coding Pol II transcripts, such as enhancer RNAs (eRNAs), small nuclear RNAs (snRNAs), telomerase RNAs and long non-coding RNAs (lncRNAs). Within the integrator complex, INTS6 acts as a molecular adapter that promotes assembly of protein phosphatase 2A (PP2A) subunits to the integrator core complex, promoting recruitment of PP2A to transcription pause-release checkpoint. In Danio rerio (Zebrafish), this protein is Integrator complex subunit 6 (ints6l).